We begin with the raw amino-acid sequence, 251 residues long: MNHFAKRIIPCLDVKDGRVVKGVNFVGLVDAGDPVEIAKRYNDEGADELCFLDITASHLGRDTIVDVVKKVASKLFIPLTVGGGIRTIDDISRLLNAGCDKVSLNSSAIKDPNLIDEAAKKFGSQCVVVAIDAKKIENGYSVFINGGRIDTKKDAFSWAKEVESRGAGEILLTSMDNDGVKQGFSLELTKIFSALSIPTIASGGAGKMEHFKDAFEVGADACLAASIFHFGEIEIKKLKEYLKANGVEVRL.

Catalysis depends on residues Asp-13 and Asp-132.

This sequence belongs to the HisA/HisF family. Heterodimer of HisH and HisF.

The protein localises to the cytoplasm. The catalysed reaction is 5-[(5-phospho-1-deoxy-D-ribulos-1-ylimino)methylamino]-1-(5-phospho-beta-D-ribosyl)imidazole-4-carboxamide + L-glutamine = D-erythro-1-(imidazol-4-yl)glycerol 3-phosphate + 5-amino-1-(5-phospho-beta-D-ribosyl)imidazole-4-carboxamide + L-glutamate + H(+). Its pathway is amino-acid biosynthesis; L-histidine biosynthesis; L-histidine from 5-phospho-alpha-D-ribose 1-diphosphate: step 5/9. IGPS catalyzes the conversion of PRFAR and glutamine to IGP, AICAR and glutamate. The HisF subunit catalyzes the cyclization activity that produces IGP and AICAR from PRFAR using the ammonia provided by the HisH subunit. In Campylobacter concisus (strain 13826), this protein is Imidazole glycerol phosphate synthase subunit HisF.